The following is a 215-amino-acid chain: Cytochrome b6 (215 aa).

Residues 32–52 (IFYCIGGIVFTSFLIQVASGF) traverse the membrane as a helical segment. Cys-35 provides a ligand contact to heme c. His-86 and His-100 together coordinate heme b. The next 3 helical transmembrane spans lie at 90–110 (ASMMVLMLILHMFRVYLTGGF), 116–136 (LTWVTGVILAVLTVSFGVTGY), and 186–206 (LHTFVLPLLTAVFMLMHFLMI). Heme b-binding residues include His-187 and His-202.

It belongs to the cytochrome b family. PetB subfamily. As to quaternary structure, the 4 large subunits of the cytochrome b6-f complex are cytochrome b6, subunit IV (17 kDa polypeptide, PetD), cytochrome f and the Rieske protein, while the 4 small subunits are PetG, PetL, PetM and PetN. The complex functions as a dimer. Heme b serves as cofactor. Requires heme c as cofactor.

It is found in the plastid. The protein resides in the chloroplast thylakoid membrane. Its function is as follows. Component of the cytochrome b6-f complex, which mediates electron transfer between photosystem II (PSII) and photosystem I (PSI), cyclic electron flow around PSI, and state transitions. The polypeptide is Cytochrome b6 (Gracilaria tenuistipitata var. liui (Red alga)).